Consider the following 137-residue polypeptide: L-ectoine synthase (137 aa).

Residues 118–137 form a disordered region; it reads VHREDGSYAPADEADDQKPL.

Belongs to the ectoine synthase family.

The enzyme catalyses (2S)-4-acetamido-2-aminobutanoate = L-ectoine + H2O. It participates in amine and polyamine biosynthesis; ectoine biosynthesis; L-ectoine from L-aspartate 4-semialdehyde: step 3/3. Seems to require potassium ions for its activity and stability. Slightly inhibited by N-ethylmaleimide. Functionally, catalyzes the circularization of gamma-N-acetyl-alpha,gamma-diaminobutyric acid (ADABA) to ectoine (1,4,5,6-tetrahydro-2-methyl-4-pyrimidine carboxylic acid), which is an excellent osmoprotectant. Does not act on N-acetylated amino acids like N-alpha-acetyl-L-asparagine,N-alpha-acetyl-L-ornithine, N-alpha-acetyl-L-lysine and N-epsilon-acetyl-L-lysine. The protein is L-ectoine synthase (ectC) of Halomonas elongata (strain ATCC 33173 / DSM 2581 / NBRC 15536 / NCIMB 2198 / 1H9).